The sequence spans 168 residues: UPF0134 protein MPN_524 (168 aa).

The protein belongs to the UPF0134 family.

The chain is UPF0134 protein MPN_524 from Mycoplasma pneumoniae (strain ATCC 29342 / M129 / Subtype 1) (Mycoplasmoides pneumoniae).